Consider the following 80-residue polypeptide: Putative membrane protein insertion efficiency factor (80 aa).

It belongs to the UPF0161 family.

The protein resides in the cell inner membrane. Functionally, could be involved in insertion of integral membrane proteins into the membrane. The sequence is that of Putative membrane protein insertion efficiency factor from Kosmotoga olearia (strain ATCC BAA-1733 / DSM 21960 / TBF 19.5.1).